A 464-amino-acid chain; its full sequence is DNA primase DnaG (464 aa).

The 75-residue stretch at 171–245 (DTIIIVEGRA…DIDYVARAPK (75 aa)) folds into the Toprim domain. 3 residues coordinate Mg(2+): E177, D219, and D221.

This sequence belongs to the archaeal DnaG primase family. As to quaternary structure, forms a ternary complex with MCM helicase and DNA. Requires Mg(2+) as cofactor.

It catalyses the reaction ssDNA + n NTP = ssDNA/pppN(pN)n-1 hybrid + (n-1) diphosphate.. RNA polymerase that catalyzes the synthesis of short RNA molecules used as primers for DNA polymerase during DNA replication. This chain is DNA primase DnaG, found in Methanococcus aeolicus (strain ATCC BAA-1280 / DSM 17508 / OCM 812 / Nankai-3).